The following is a 98-amino-acid chain: NADH-ubiquinone oxidoreductase chain 4L (98 aa).

The next 3 helical transmembrane spans lie at 1–21 (MSMV…GLLM), 29–49 (SLLC…ITIM), and 61–81 (IILL…LVMI).

Belongs to the complex I subunit 4L family. Core subunit of respiratory chain NADH dehydrogenase (Complex I) which is composed of 45 different subunits.

The protein localises to the mitochondrion inner membrane. The catalysed reaction is a ubiquinone + NADH + 5 H(+)(in) = a ubiquinol + NAD(+) + 4 H(+)(out). In terms of biological role, core subunit of the mitochondrial membrane respiratory chain NADH dehydrogenase (Complex I) which catalyzes electron transfer from NADH through the respiratory chain, using ubiquinone as an electron acceptor. Part of the enzyme membrane arm which is embedded in the lipid bilayer and involved in proton translocation. The protein is NADH-ubiquinone oxidoreductase chain 4L (MT-ND4L) of Procyon lotor (Raccoon).